Reading from the N-terminus, the 89-residue chain is Small ribosomal subunit protein uS15 (89 aa).

This sequence belongs to the universal ribosomal protein uS15 family. As to quaternary structure, part of the 30S ribosomal subunit. Forms a bridge to the 50S subunit in the 70S ribosome, contacting the 23S rRNA.

One of the primary rRNA binding proteins, it binds directly to 16S rRNA where it helps nucleate assembly of the platform of the 30S subunit by binding and bridging several RNA helices of the 16S rRNA. Its function is as follows. Forms an intersubunit bridge (bridge B4) with the 23S rRNA of the 50S subunit in the ribosome. This chain is Small ribosomal subunit protein uS15, found in Nostoc punctiforme (strain ATCC 29133 / PCC 73102).